The following is a 287-amino-acid chain: Lipoyl synthase (287 aa).

[4Fe-4S] cluster-binding residues include Cys34, Cys39, Cys45, Cys60, Cys64, Cys67, and Ser273. Residues 46–262 enclose the Radical SAM core domain; the sequence is WNKRHATVMI…KYIAYSKGFL (217 aa).

The protein belongs to the radical SAM superfamily. Lipoyl synthase family. Requires [4Fe-4S] cluster as cofactor.

Its subcellular location is the cytoplasm. The catalysed reaction is [[Fe-S] cluster scaffold protein carrying a second [4Fe-4S](2+) cluster] + N(6)-octanoyl-L-lysyl-[protein] + 2 oxidized [2Fe-2S]-[ferredoxin] + 2 S-adenosyl-L-methionine + 4 H(+) = [[Fe-S] cluster scaffold protein] + N(6)-[(R)-dihydrolipoyl]-L-lysyl-[protein] + 4 Fe(3+) + 2 hydrogen sulfide + 2 5'-deoxyadenosine + 2 L-methionine + 2 reduced [2Fe-2S]-[ferredoxin]. Its pathway is protein modification; protein lipoylation via endogenous pathway; protein N(6)-(lipoyl)lysine from octanoyl-[acyl-carrier-protein]: step 2/2. Its function is as follows. Catalyzes the radical-mediated insertion of two sulfur atoms into the C-6 and C-8 positions of the octanoyl moiety bound to the lipoyl domains of lipoate-dependent enzymes, thereby converting the octanoylated domains into lipoylated derivatives. The sequence is that of Lipoyl synthase from Wolbachia pipientis wMel.